Reading from the N-terminus, the 809-residue chain is DNA replication helicase (809 aa).

Gly72–Ser79 contributes to the ATP binding site.

Belongs to the herpesviridae helicase family. In terms of assembly, associates with the primase and the primase-associated factor to form the helicase-primase complex.

It is found in the host nucleus. In terms of biological role, component of the helicase/primase complex. Unwinds the DNA at the replication forks and generates single-stranded DNA for both leading and lagging strand synthesis. The primase synthesizes short RNA primers on the lagging strand that the polymerase elongates using dNTPs. Possesses helicase-like motifs and therefore may act as the helicase subunit of the complex. In Epstein-Barr virus (strain B95-8) (HHV-4), this protein is DNA replication helicase.